A 277-amino-acid polypeptide reads, in one-letter code: MGIKVYKPTTNGRRNMTSLDFAEITTSTPEKSLLVSLKNKAGRNNNGRITVRHQGGGHKRHYRLIDFKRNKDGVEAVVKTIEYDPNRTANIALVHYTDGVKAYIIAPKGLEVGQRIVSGPDADIKIGNALPLANIPVGTVVHNIELKPGKGGELVRAAGASAQVLGQEGKYVLVRLQSGEVRMILGTCRATVGTVGNEQQSLVNIGKAGRSRWKGIRPTVRGSVMNPNDHPHGGGEGKAPVGRKAPSTPWGKPALGLKTRNKKAKSNKLIVRRRNEK.

A disordered region spans residues 219–277; the sequence is TVRGSVMNPNDHPHGGGEGKAPVGRKAPSTPWGKPALGLKTRNKKAKSNKLIVRRRNEK. Over residues 259–277 the composition is skewed to basic residues; the sequence is TRNKKAKSNKLIVRRRNEK.

Belongs to the universal ribosomal protein uL2 family. In terms of assembly, part of the 50S ribosomal subunit. Forms a bridge to the 30S subunit in the 70S ribosome.

One of the primary rRNA binding proteins. Required for association of the 30S and 50S subunits to form the 70S ribosome, for tRNA binding and peptide bond formation. It has been suggested to have peptidyltransferase activity; this is somewhat controversial. Makes several contacts with the 16S rRNA in the 70S ribosome. This Streptococcus equi subsp. zooepidemicus (strain MGCS10565) protein is Large ribosomal subunit protein uL2.